A 219-amino-acid polypeptide reads, in one-letter code: Large ribosomal subunit protein uL3 (219 aa).

A compositionally biased stretch (polar residues) spans Gly-133 to Val-145. Positions Gly-133–Gln-153 are disordered. N5-methylglutamine is present on Gln-153.

It belongs to the universal ribosomal protein uL3 family. As to quaternary structure, part of the 50S ribosomal subunit. Forms a cluster with proteins L14 and L19. Methylated by PrmB.

In terms of biological role, one of the primary rRNA binding proteins, it binds directly near the 3'-end of the 23S rRNA, where it nucleates assembly of the 50S subunit. The chain is Large ribosomal subunit protein uL3 from Paraburkholderia phymatum (strain DSM 17167 / CIP 108236 / LMG 21445 / STM815) (Burkholderia phymatum).